The sequence spans 862 residues: Protein JOKA2 (862 aa).

A PB1 domain is found at 6–90 (SIVIKVKYEE…NPLRISARLN (85 aa)). Over residues 92–106 (GERSGRASARSSGNS) the composition is skewed to low complexity. 3 disordered regions span residues 92 to 117 (GERS…VQPP), 194 to 234 (KGNT…ASNE), and 295 to 345 (VRNS…DSSG). The span at 325-345 (SASSSKVKQCNWDSPNADSSG) shows a compositional bias: polar residues. The ZZ-type; degenerate zinc-finger motif lies at 442–492 (HKGVRCDGCGVHPITGPRFISKVKENYDLCSICFAEMGNDADYIRMDRPLT). The Zn(2+) site is built by Cys447, Cys450, Cys471, and Cys474. Positions 811-860 (SVDDLCGVAEWDPILEELKEMGFCDKEMNKKLLKKNNGSIKRVVMDLIAG) constitute a UBA domain. The short motif at 817 to 824 (GVAEWDPI) is the ATG8 interacting motif (AIM) element.

Interacts (via C-terminal AIM motif) with ATG8CL.

Its subcellular location is the vacuole. The protein localises to the cytoplasmic vesicle. The protein resides in the autophagosome. Autophagic substrate that functions as a host autophagy cargo receptor. Requires ATG8 protein expression to be recognized as an autophagic substrate. Activates ATG8CL-mediated selective autophagy, and contributes to defense against the fungal pathogen Phytophtora infestans. In Solanum tuberosum (Potato), this protein is Protein JOKA2.